The chain runs to 446 residues: Adenylosuccinate synthetase (446 aa).

GTP-binding positions include Gly20 to Lys26 and Gly48 to Thr50. Asp21 (proton acceptor) is an active-site residue. Asp21 and Gly48 together coordinate Mg(2+). IMP contacts are provided by residues Asp21 to Lys24, Asn46 to His49, Thr137, Arg151, Gln232, Thr247, and Arg319. The Proton donor role is filled by His49. Residue Ser315–Arg321 coordinates substrate. GTP contacts are provided by residues Arg321, Lys347–Asp349, and Ser429–Gly431.

The protein belongs to the adenylosuccinate synthetase family. In terms of assembly, homodimer. It depends on Mg(2+) as a cofactor.

The protein localises to the cytoplasm. The enzyme catalyses IMP + L-aspartate + GTP = N(6)-(1,2-dicarboxyethyl)-AMP + GDP + phosphate + 2 H(+). The protein operates within purine metabolism; AMP biosynthesis via de novo pathway; AMP from IMP: step 1/2. In terms of biological role, plays an important role in the de novo pathway of purine nucleotide biosynthesis. Catalyzes the first committed step in the biosynthesis of AMP from IMP. The protein is Adenylosuccinate synthetase of Ralstonia pickettii (strain 12J).